The chain runs to 551 residues: Probable aldehyde dehydrogenase (551 aa).

278–283 (GSSRVA) contributes to the NAD(+) binding site. The Proton acceptor role is filled by glutamate 297. Catalysis depends on cysteine 332, which acts as the Nucleophile.

It belongs to the aldehyde dehydrogenase family. As to expression, in uninfected plants, highest levels found in stems. In plants infected with the flax rust, highest levels in leaves. Higher levels of expression in infected leaves than uninfected stems.

It catalyses the reaction an aldehyde + NAD(+) + H2O = a carboxylate + NADH + 2 H(+). Its function is as follows. Could be involved in facilitating the biotrophic relationship between the plant and the rust fungus. This chain is Probable aldehyde dehydrogenase (FIS1), found in Linum usitatissimum (Flax).